Reading from the N-terminus, the 1272-residue chain is Magnesium-chelatase subunit H (1272 aa).

Belongs to the Mg-chelatase subunit H family.

The catalysed reaction is protoporphyrin IX + Mg(2+) + ATP + H2O = Mg-protoporphyrin IX + ADP + phosphate + 3 H(+). Its pathway is porphyrin-containing compound metabolism; bacteriochlorophyll biosynthesis (light-independent). Its function is as follows. Involved in bacteriochlorophyll pigment biosynthesis; introduces a magnesium ion into protoporphyrin IX to yield Mg-protoroporphyrin IX. The sequence is that of Magnesium-chelatase subunit H (bchH) from Chlorobaculum parvum (strain DSM 263 / NCIMB 8327) (Chlorobium vibrioforme subsp. thiosulfatophilum).